The following is a 199-amino-acid chain: Probable chemoreceptor glutamine deamidase CheD (199 aa).

Belongs to the CheD family.

The catalysed reaction is L-glutaminyl-[protein] + H2O = L-glutamyl-[protein] + NH4(+). In terms of biological role, probably deamidates glutamine residues to glutamate on methyl-accepting chemotaxis receptors (MCPs), playing an important role in chemotaxis. The chain is Probable chemoreceptor glutamine deamidase CheD from Cereibacter sphaeroides (strain ATCC 17025 / ATH 2.4.3) (Rhodobacter sphaeroides).